Reading from the N-terminus, the 535-residue chain is Bifunctional purine biosynthesis protein PurH (535 aa).

Positions 6–151 constitute an MGS-like domain; that stretch reads TRLPVRRALI…KNHKDVAIVV (146 aa).

This sequence belongs to the PurH family.

It carries out the reaction (6R)-10-formyltetrahydrofolate + 5-amino-1-(5-phospho-beta-D-ribosyl)imidazole-4-carboxamide = 5-formamido-1-(5-phospho-D-ribosyl)imidazole-4-carboxamide + (6S)-5,6,7,8-tetrahydrofolate. The catalysed reaction is IMP + H2O = 5-formamido-1-(5-phospho-D-ribosyl)imidazole-4-carboxamide. The protein operates within purine metabolism; IMP biosynthesis via de novo pathway; 5-formamido-1-(5-phospho-D-ribosyl)imidazole-4-carboxamide from 5-amino-1-(5-phospho-D-ribosyl)imidazole-4-carboxamide (10-formyl THF route): step 1/1. It participates in purine metabolism; IMP biosynthesis via de novo pathway; IMP from 5-formamido-1-(5-phospho-D-ribosyl)imidazole-4-carboxamide: step 1/1. The chain is Bifunctional purine biosynthesis protein PurH from Pseudomonas putida (strain ATCC 700007 / DSM 6899 / JCM 31910 / BCRC 17059 / LMG 24140 / F1).